A 756-amino-acid polypeptide reads, in one-letter code: 1-phosphatidylinositol 4,5-bisphosphate phosphodiesterase delta-1 (756 aa).

A PH domain is found at 21–130 (ALLKGSQLLK…WVQGLRKIIH (110 aa)). The segment at 30 to 57 (KVKSSSWRRERFYKLQEDCKTIWQESRK) is substrate binding. EF-hand domains lie at 140 to 175 (KLQH…LNIQ) and 176 to 211 (VDDG…LTQR). Ca(2+) contacts are provided by aspartate 153, asparagine 155, aspartate 157, lysine 159, glutamate 164, aspartate 189, serine 191, threonine 193, serine 195, and glutamate 200. The O-linked (GlcNAc) serine glycan is linked to serine 191. An O-linked (GlcNAc) threonine glycan is attached at threonine 193. A PI-PLC X-box domain is found at 296 to 440 (QDMDQPLSHY…LKGKILLKGK (145 aa)). Residue histidine 311 is part of the active site. Residues asparagine 312, glutamate 341, and aspartate 343 each coordinate Ca(2+). The active site involves histidine 356. Glutamate 390 serves as a coordination point for Ca(2+). The substrate site is built by lysine 438 and lysine 440. Residue threonine 457 is modified to Phosphothreonine. Residue serine 460 is modified to Phosphoserine. The PI-PLC Y-box domain occupies 492–609 (LSDMIIYCKS…GYVLKPAFLR (118 aa)). Residues serine 522 and arginine 549 each contribute to the substrate site. A C2 domain is found at 609–737 (RDPNTTFNSR…QGYRHVHLLS (129 aa)). Ca(2+) is bound by residues isoleucine 651, aspartate 653, asparagine 677, aspartate 706, tyrosine 707, and aspartate 708.

In terms of assembly, interacts with TGM2. Requires Ca(2+) as cofactor.

The enzyme catalyses a 1,2-diacyl-sn-glycero-3-phospho-(1D-myo-inositol-4,5-bisphosphate) + H2O = 1D-myo-inositol 1,4,5-trisphosphate + a 1,2-diacyl-sn-glycerol + H(+). The catalysed reaction is a 1,2-diacyl-sn-glycero-3-phospho-(1D-myo-inositol) + H2O = 1D-myo-inositol 1-phosphate + a 1,2-diacyl-sn-glycerol + H(+). The production of the second messenger molecules diacylglycerol (DAG) and inositol 1,4,5-trisphosphate (IP3) is mediated by activated phosphatidylinositol-specific phospholipase C enzymes. Essential for trophoblast and placental development. Binds phosphatidylinositol 4,5-bisphosphate. This Rattus norvegicus (Rat) protein is 1-phosphatidylinositol 4,5-bisphosphate phosphodiesterase delta-1.